We begin with the raw amino-acid sequence, 491 residues long: Cobyric acid synthase (491 aa).

The GATase cobBQ-type domain occupies 251–444 (GITIAVIRLP…LHGLFTNDEF (194 aa)). The active-site Nucleophile is the Cys-329. Residue His-436 is part of the active site.

Belongs to the CobB/CobQ family. CobQ subfamily.

Its pathway is cofactor biosynthesis; adenosylcobalamin biosynthesis. Catalyzes amidations at positions B, D, E, and G on adenosylcobyrinic A,C-diamide. NH(2) groups are provided by glutamine, and one molecule of ATP is hydrogenolyzed for each amidation. This chain is Cobyric acid synthase, found in Chloroflexus aggregans (strain MD-66 / DSM 9485).